The chain runs to 178 residues: ATP synthase subunit delta (178 aa).

Belongs to the ATPase delta chain family. As to quaternary structure, F-type ATPases have 2 components, F(1) - the catalytic core - and F(0) - the membrane proton channel. F(1) has five subunits: alpha(3), beta(3), gamma(1), delta(1), epsilon(1). F(0) has three main subunits: a(1), b(2) and c(10-14). The alpha and beta chains form an alternating ring which encloses part of the gamma chain. F(1) is attached to F(0) by a central stalk formed by the gamma and epsilon chains, while a peripheral stalk is formed by the delta and b chains.

It is found in the cell inner membrane. F(1)F(0) ATP synthase produces ATP from ADP in the presence of a proton or sodium gradient. F-type ATPases consist of two structural domains, F(1) containing the extramembraneous catalytic core and F(0) containing the membrane proton channel, linked together by a central stalk and a peripheral stalk. During catalysis, ATP synthesis in the catalytic domain of F(1) is coupled via a rotary mechanism of the central stalk subunits to proton translocation. Its function is as follows. This protein is part of the stalk that links CF(0) to CF(1). It either transmits conformational changes from CF(0) to CF(1) or is implicated in proton conduction. In Acinetobacter baumannii (strain SDF), this protein is ATP synthase subunit delta.